A 140-amino-acid chain; its full sequence is UPF0102 protein ACIAD1132 (140 aa).

Belongs to the UPF0102 family.

This Acinetobacter baylyi (strain ATCC 33305 / BD413 / ADP1) protein is UPF0102 protein ACIAD1132.